Reading from the N-terminus, the 413-residue chain is Eukaryotic initiation factor 4A-9 (413 aa).

The Q motif signature appears at 40–68 (HSFDAMGLKENLLRGIYAYGFEKPSAIQQ). A Helicase ATP-binding domain is found at 71-241 (IVPFCKGLDV…RKFMNKPVRI (171 aa)). 84 to 91 (AQSGTGKT) provides a ligand contact to ATP. Positions 189–192 (DEAD) match the DEAD box motif. In terms of domain architecture, Helicase C-terminal spans 252–413 (GIKQFYVNVD…ELPANVADLL (162 aa)).

The protein belongs to the DEAD box helicase family. eIF4A subfamily. In terms of assembly, eIF4F is a multi-subunit complex, the composition of which varies with external and internal environmental conditions. It is composed of at least EIF4A, EIF4E and EIF4G.

It catalyses the reaction ATP + H2O = ADP + phosphate + H(+). In terms of biological role, ATP-dependent RNA helicase which is a subunit of the eIF4F complex involved in cap recognition and is required for mRNA binding to ribosome. In the current model of translation initiation, eIF4A unwinds RNA secondary structures in the 5'-UTR of mRNAs which is necessary to allow efficient binding of the small ribosomal subunit, and subsequent scanning for the initiator codon. This chain is Eukaryotic initiation factor 4A-9, found in Nicotiana tabacum (Common tobacco).